The chain runs to 450 residues: Tubulin alpha-5 chain (450 aa).

7 residues coordinate GTP: Gln-11, Glu-71, Gly-144, Thr-145, Thr-179, Asn-206, and Asn-228. Residue Glu-71 participates in Mg(2+) binding. Glu-254 is an active-site residue. Thr-349 bears the Phosphothreonine mark. The interval 429 to 450 is disordered; it reads EKDYEEVGAEGGDDEEDEGEDY. Residues 431–450 show a composition bias toward acidic residues; sequence DYEEVGAEGGDDEEDEGEDY.

It belongs to the tubulin family. In terms of assembly, dimer of alpha and beta chains. A typical microtubule is a hollow water-filled tube with an outer diameter of 25 nm and an inner diameter of 15 nM. Alpha-beta heterodimers associate head-to-tail to form protofilaments running lengthwise along the microtubule wall with the beta-tubulin subunit facing the microtubule plus end conferring a structural polarity. Microtubules usually have 13 protofilaments but different protofilament numbers can be found in some organisms and specialized cells. It depends on Mg(2+) as a cofactor. Post-translationally, undergoes a tyrosination/detyrosination cycle, the cyclic removal and re-addition of a C-terminal tyrosine residue by the enzymes tubulin tyrosine carboxypeptidase (TTCP) and tubulin tyrosine ligase (TTL), respectively.

Its subcellular location is the cytoplasm. The protein localises to the cytoskeleton. The catalysed reaction is GTP + H2O = GDP + phosphate + H(+). In terms of biological role, tubulin is the major constituent of microtubules, a cylinder consisting of laterally associated linear protofilaments composed of alpha- and beta-tubulin heterodimers. Microtubules grow by the addition of GTP-tubulin dimers to the microtubule end, where a stabilizing cap forms. Below the cap, tubulin dimers are in GDP-bound state, owing to GTPase activity of alpha-tubulin. This chain is Tubulin alpha-5 chain (TUBA5), found in Arabidopsis thaliana (Mouse-ear cress).